The sequence spans 407 residues: Indoleamine 2,3-dioxygenase 2 (407 aa).

His-347 serves as a coordination point for heme.

This sequence belongs to the indoleamine 2,3-dioxygenase family. Heme serves as cofactor. Detected in liver, small intestine, spleen, placenta, thymus, lung, brain, kidney, and colon. Also expressed at low level in testis and thyroid. Not expressed in the majority of human tumor samples (&gt;99%).

It catalyses the reaction L-tryptophan + O2 = N-formyl-L-kynurenine. The protein operates within amino-acid degradation; L-tryptophan degradation via kynurenine pathway; L-kynurenine from L-tryptophan: step 1/2. With respect to regulation, activity is inhibited by D-1MT (1-methyl-D-tryptophan) and MTH-trp (methylthiohydantoin-DL-tryptophan) but not L-1MT (1-methyl-L-tryptophan). Its function is as follows. Catalyzes the first and rate limiting step of the catabolism of the essential amino acid tryptophan along the kynurenine pathway. Involved in immune regulation. May not play a significant role in tryptophan-related tumoral resistance. The polypeptide is Indoleamine 2,3-dioxygenase 2 (Homo sapiens (Human)).